A 95-amino-acid polypeptide reads, in one-letter code: Co-chaperonin GroES (95 aa).

Belongs to the GroES chaperonin family. Heptamer of 7 subunits arranged in a ring. Interacts with the chaperonin GroEL.

Its subcellular location is the cytoplasm. Functionally, together with the chaperonin GroEL, plays an essential role in assisting protein folding. The GroEL-GroES system forms a nano-cage that allows encapsulation of the non-native substrate proteins and provides a physical environment optimized to promote and accelerate protein folding. GroES binds to the apical surface of the GroEL ring, thereby capping the opening of the GroEL channel. This is Co-chaperonin GroES from Oleidesulfovibrio alaskensis (strain ATCC BAA-1058 / DSM 17464 / G20) (Desulfovibrio alaskensis).